Consider the following 652-residue polypeptide: DNA ligase (652 aa).

Residues 30–34, 79–80, and Glu-108 each bind NAD(+); these read DEVYD and SL. Lys-110 serves as the catalytic N6-AMP-lysine intermediate. 4 residues coordinate NAD(+): Arg-131, Glu-165, Lys-280, and Lys-304. Residues Cys-398, Cys-401, Cys-414, and Cys-419 each coordinate Zn(2+). The 79-residue stretch at 574 to 652 folds into the BRCT domain; it reads AKENPFKGKS…DEMRSKIEQA (79 aa).

This sequence belongs to the NAD-dependent DNA ligase family. LigA subfamily. Requires Mg(2+) as cofactor. Mn(2+) is required as a cofactor.

It carries out the reaction NAD(+) + (deoxyribonucleotide)n-3'-hydroxyl + 5'-phospho-(deoxyribonucleotide)m = (deoxyribonucleotide)n+m + AMP + beta-nicotinamide D-nucleotide.. Its function is as follows. DNA ligase that catalyzes the formation of phosphodiester linkages between 5'-phosphoryl and 3'-hydroxyl groups in double-stranded DNA using NAD as a coenzyme and as the energy source for the reaction. It is essential for DNA replication and repair of damaged DNA. This Sulfurimonas denitrificans (strain ATCC 33889 / DSM 1251) (Thiomicrospira denitrificans (strain ATCC 33889 / DSM 1251)) protein is DNA ligase.